The primary structure comprises 336 residues: DNA-directed RNA polymerase subunit alpha (336 aa).

The interval 1-226 (MLIAQRPTLS…ELFGLARELN (226 aa)) is alpha N-terminal domain (alpha-NTD). The alpha C-terminal domain (alpha-CTD) stretch occupies residues 243-336 (LAADMALPIE…SDDAFGDDEL (94 aa)).

It belongs to the RNA polymerase alpha chain family. In terms of assembly, homodimer. The RNAP catalytic core consists of 2 alpha, 1 beta, 1 beta' and 1 omega subunit. When a sigma factor is associated with the core the holoenzyme is formed, which can initiate transcription.

It carries out the reaction RNA(n) + a ribonucleoside 5'-triphosphate = RNA(n+1) + diphosphate. In terms of biological role, DNA-dependent RNA polymerase catalyzes the transcription of DNA into RNA using the four ribonucleoside triphosphates as substrates. This Renibacterium salmoninarum (strain ATCC 33209 / DSM 20767 / JCM 11484 / NBRC 15589 / NCIMB 2235) protein is DNA-directed RNA polymerase subunit alpha.